The following is a 591-amino-acid chain: V-type ATP synthase alpha chain (591 aa).

233-240 contacts ATP; it reads GPFGAGKT.

It belongs to the ATPase alpha/beta chains family.

The enzyme catalyses ATP + H2O + 4 H(+)(in) = ADP + phosphate + 5 H(+)(out). Functionally, produces ATP from ADP in the presence of a proton gradient across the membrane. The V-type alpha chain is a catalytic subunit. The sequence is that of V-type ATP synthase alpha chain from Streptococcus pyogenes serotype M5 (strain Manfredo).